A 189-amino-acid polypeptide reads, in one-letter code: Probable pericyclase scpY (189 aa).

It belongs to the pericyclase pydY family.

It participates in mycotoxin biosynthesis. Probable pericyclase; part of the gene scp cluster that mediates the biosynthesis of a hirsutellone-like compound that has still to be identified. The chain is Probable pericyclase scpY from Mollisia scopiformis (Conifer needle endophyte fungus).